We begin with the raw amino-acid sequence, 79 residues long: DNA-directed RNA polymerase subunit omega (79 aa).

It belongs to the RNA polymerase subunit omega family. In terms of assembly, the RNAP catalytic core consists of 2 alpha, 1 beta, 1 beta' and 1 omega subunit. When a sigma factor is associated with the core the holoenzyme is formed, which can initiate transcription.

It catalyses the reaction RNA(n) + a ribonucleoside 5'-triphosphate = RNA(n+1) + diphosphate. Its function is as follows. Promotes RNA polymerase assembly. Latches the N- and C-terminal regions of the beta' subunit thereby facilitating its interaction with the beta and alpha subunits. The chain is DNA-directed RNA polymerase subunit omega from Thermotoga neapolitana (strain ATCC 49049 / DSM 4359 / NBRC 107923 / NS-E).